The sequence spans 436 residues: 3-ketoacyl-CoA thiolase (436 aa).

The active-site Acyl-thioester intermediate is the Cys-99. Active-site proton acceptor residues include His-392 and Cys-422.

The protein belongs to the thiolase-like superfamily. Thiolase family. As to quaternary structure, heterotetramer of two alpha chains (FadJ) and two beta chains (FadI).

The protein localises to the cytoplasm. The enzyme catalyses an acyl-CoA + acetyl-CoA = a 3-oxoacyl-CoA + CoA. Its pathway is lipid metabolism; fatty acid beta-oxidation. Its function is as follows. Catalyzes the final step of fatty acid oxidation in which acetyl-CoA is released and the CoA ester of a fatty acid two carbons shorter is formed. This Escherichia coli O8 (strain IAI1) protein is 3-ketoacyl-CoA thiolase.